Consider the following 239-residue polypeptide: Ubiquinone biosynthesis O-methyltransferase (239 aa).

Residues R42, G62, D83, and M127 each contribute to the S-adenosyl-L-methionine site.

It belongs to the methyltransferase superfamily. UbiG/COQ3 family.

The enzyme catalyses a 3-demethylubiquinol + S-adenosyl-L-methionine = a ubiquinol + S-adenosyl-L-homocysteine + H(+). The catalysed reaction is a 3-(all-trans-polyprenyl)benzene-1,2-diol + S-adenosyl-L-methionine = a 2-methoxy-6-(all-trans-polyprenyl)phenol + S-adenosyl-L-homocysteine + H(+). The protein operates within cofactor biosynthesis; ubiquinone biosynthesis. O-methyltransferase that catalyzes the 2 O-methylation steps in the ubiquinone biosynthetic pathway. The protein is Ubiquinone biosynthesis O-methyltransferase of Pectobacterium carotovorum subsp. carotovorum (strain PC1).